The chain runs to 414 residues: Heterogeneous nuclear ribonucleoprotein F (414 aa).

An N-acetylmethionine modification is found at methionine 1. Methionine 2 carries the post-translational modification N-acetylmethionine; in Heterogeneous nuclear ribonucleoprotein F, N-terminally processed. In terms of domain architecture, RRM 1 spans phenylalanine 11–arginine 90. Lysine 72 is covalently cross-linked (Glycyl lysine isopeptide (Lys-Gly) (interchain with G-Cter in SUMO)). The interaction with RNA stretch occupies residues arginine 81 to phenylalanine 86. A Glycyl lysine isopeptide (Lys-Gly) (interchain with G-Cter in SUMO2) cross-link involves residue lysine 87. Phosphoserine occurs at positions 104 and 161. The 78-residue stretch at glycine 111–glutamine 188 folds into the RRM 2 domain. Lysine 167 is covalently cross-linked (Glycyl lysine isopeptide (Lys-Gly) (interchain with G-Cter in SUMO2)). The tract at residues arginine 179 to phenylalanine 184 is interaction with RNA. Lysine 185 is covalently cross-linked (Glycyl lysine isopeptide (Lys-Gly) (interchain with G-Cter in SUMO2)). Phosphoserine is present on residues serine 187, serine 193, and serine 195. Lysine 200 carries the N6-acetyllysine; alternate modification. Lysine 200 participates in a covalent cross-link: Glycyl lysine isopeptide (Lys-Gly) (interchain with G-Cter in SUMO2); alternate. Threonine 215 is subject to Phosphothreonine. Position 224 is an N6-acetyllysine; alternate (lysine 224). Lysine 224 is covalently cross-linked (Glycyl lysine isopeptide (Lys-Gly) (interchain with G-Cter in SUMO2); alternate). Phosphoserine is present on serine 265. Residues histidine 289 to glycine 366 enclose the RRM 3 domain. The interval arginine 355–phenylalanine 360 is interaction with RNA.

Identified in the spliceosome C complex. Interacts with AGO1, AGO2, TBP and TXNL4/DIM1. Sumoylated.

The protein resides in the nucleus. Its subcellular location is the nucleoplasm. In terms of biological role, component of the heterogeneous nuclear ribonucleoprotein (hnRNP) complexes which provide the substrate for the processing events that pre-mRNAs undergo before becoming functional, translatable mRNAs in the cytoplasm. Plays a role in the regulation of alternative splicing events. Binds G-rich sequences in pre-mRNAs and keeps target RNA in an unfolded state. The chain is Heterogeneous nuclear ribonucleoprotein F (HNRNPF) from Bos taurus (Bovine).